Consider the following 265-residue polypeptide: MNNPTSDDRLRFQQKCHKSMLNTGAIFKNCKLRNGDVLQEVTESLTEDSEFNYIVNESQNVSTRLIFWNKWIYILCANTSSNITATRIFRLDDDQPWNLESLVAEVCPVDTDNRLAEHAARTAKDTSANELNYESYQEKSRAPFGFAGPFGAMPGSQPMFPSIGASDLYPAGIGGSDMGNDGGMIPTFNHPIFHPENRSRNEQASANRTNIPPGARYDPTGPGDFRGFGRDERKPQFPFKGPRSQFPGEPDNDDFMPPGSSDMFM.

Residues H194–M265 are disordered.

The protein belongs to the proteasome inhibitor PI31 family. In terms of assembly, interacts with the 20S proteasome.

The protein resides in the cytoplasm. It localises to the nucleus. Its function is as follows. May play a role in the establishment of transcriptional silencing boundaries, preventing the propagation of heterochromatic silencing. This chain is Silencing boundary-establishment protein FUB1-like protein, found in Schizosaccharomyces pombe (strain 972 / ATCC 24843) (Fission yeast).